The following is a 374-amino-acid chain: Transcription factor NF-E2 45 kDa subunit (374 aa).

2 disordered regions span residues 1–21 (MSPC…IPEP) and 40–61 (LNAP…GPPP). The segment at 1–83 (MSPCPPQQSR…PGFPLPAPPY (83 aa)) is required for interaction with MAPK8. The interval 1–207 (MSPCPPQQSR…PPAETPLALE (207 aa)) is transactivation domain. Over residues 48–61 (FEPPAPVPYPGPPP) the composition is skewed to pro residues. 2 consecutive short sequence motifs (PXY motif) follow at residues 61–65 (PPPSY) and 79–83 (PAPPY). A disordered region spans residues 132–165 (LSAGPSKPQEDPESDSGLSLNYSDAESLELEGTE). Position 158 is a phosphoserine; by MAPK8 (Ser158). The residue at position 171 (Ser171) is a Phosphoserine; by PKA. Residues 207–227 (EPSSGPVRAKPTARGEAGSRD) form a disordered region. One can recognise a bZIP domain in the interval 267–330 (LVRDIRRRGK…EVMRQQLTDL (64 aa)). The interval 269–288 (RDIRRRGKNKVAAQNCRKRK) is basic motif. Positions 292-299 (IVQLEREL) are leucine-zipper. Lys369 is covalently cross-linked (Glycyl lysine isopeptide (Lys-Gly) (interchain with G-Cter in SUMO); alternate). Residue Lys369 forms a Glycyl lysine isopeptide (Lys-Gly) (interchain with G-Cter in SUMO1); alternate linkage.

The protein belongs to the bZIP family. CNC subfamily. As to quaternary structure, homodimer; can bind DNA as a homodimer. Erythroid transcription activator nuclear factor erythroid-derived 2 (NF-E2), composed of a heterodimer of NFE2 and MAFK, possesses transactivation activity on beta-globin. Also forms high affinity heterodimer with MAFG; the interaction promotes erythropoiesis. Interacts (via the PXY motif 1) with ITCH (via the WW 1 domain); the interaction promotes 'Lys63'-linked ubiquitination of NFE2, translocates it to the cytoplasm and inhibits its transactivation activity. Interacts with KMT2D/MLL2; the interaction promotes transactivation of the beta-globin locus. Interacts with MAPK8 (phosphorylated form); the interaction leads to phosphorylation of NFE2 in undifferentiated cells. Post-translationally, phosphorylated on serine residues. In undifferentiated erythrocytes, phosphorylated by MAPK8 which then leads to ubiquitination and protein degradation. Sumoylated. Sumoylation is required for translocation to nuclear bodies PODs, anchoring to the gene loci, and transactivation of the beta-globin gene. In terms of processing, ubiquitinated mainly by 'Lys63'-linked ubiquitin. Polyubiquitination with 'Lys63'-linked ubiquitin by ITCH retains NFE2 in the cytoplasm preventing its transactivation activity. In undifferentiated erythrocyte, is ubiquitinated after MAPK8-mediatd phosphorylation leading to protein degradation.

The protein resides in the nucleus. Its subcellular location is the cytoplasm. In terms of biological role, component of the NF-E2 complex essential for regulating erythroid and megakaryocytic maturation and differentiation. Binds to the hypersensitive site 2 (HS2) of the beta-globin control region (LCR). This subunit (NFE2) recognizes the TCAT/C sequence of the AP-1-like core palindrome present in a number of erythroid and megakaryocytic gene promoters. Requires MAFK or other small MAF proteins for binding to the NF-E2 motif. May play a role in all aspects of hemoglobin production from globin and heme synthesis to procurement of iron. This is Transcription factor NF-E2 45 kDa subunit (NFE2) from Bos taurus (Bovine).